The sequence spans 791 residues: Cytochrome c oxidase polypeptide I+III (791 aa).

Residues 1–473 (MAITAKPKAG…LLSTIGAYIL (473 aa)) are COX1. The helical transmembrane segment at 29 to 49 (LMYTATAFFAFALAGVFSLLI) threads the bilayer. His-73 contacts Fe(II)-heme a. The next 17 membrane-spanning stretches (helical) occupy residues 78-98 (LFFF…VPLM), 111-131 (AFSY…YFFP), 155-175 (FYLA…ANFV), 201-221 (ASVL…LVLL), 244-264 (FFWF…LGIL), 282-302 (MVWA…HHMF), 312-332 (IAFA…LFNI), 347-367 (LYWV…GVML), 381-401 (FVVA…AFAG), 423-443 (FWLF…LGYL), 464-484 (LLST…IYTM), 566-586 (FAFF…WVFL), 617-637 (AWMG…ILIA), 657-677 (LWLA…VHFA), 691-711 (FGLL…SWEF), 729-749 (FFTI…GLIL), and 771-791 (SMYW…FYVW). Residues His-250, Tyr-254, His-299, and His-300 each contribute to the Cu cation site. The 1'-histidyl-3'-tyrosine (His-Tyr) cross-link spans 250–254 (HPTVY). His-385 is a heme a3 binding site. His-387 provides a ligand contact to Fe(II)-heme a. A COX3 region spans residues 545-791 (DPAHIHLPNS…LVIVTIFYVW (247 aa)).

In the N-terminal section; belongs to the heme-copper respiratory oxidase family. This sequence in the C-terminal section; belongs to the cytochrome c oxidase subunit 3 family. Possibly a heterodimer of A-protein (contains: cytochrome c oxidase subunits I and III) and subunit II. The A-protein could also present a precursor form of subunits I and III. The cofactor is Cu(2+). It depends on heme as a cofactor.

It is found in the cell membrane. The enzyme catalyses 4 Fe(II)-[cytochrome c] + O2 + 8 H(+)(in) = 4 Fe(III)-[cytochrome c] + 2 H2O + 4 H(+)(out). It participates in energy metabolism; oxidative phosphorylation. In terms of biological role, cytochrome c oxidase is the component of the respiratory chain that catalyzes the reduction of oxygen to water. Subunits 1-3 form the functional core of the enzyme complex. Co I is the catalytic subunit of the enzyme. Electrons originating in cytochrome c are transferred via the copper A center of subunit 2 and heme a of subunit 1 to the bimetallic center formed by heme a3 and copper B. This cytochrome c oxidase shows proton pump activity across the membrane in addition to the electron transfer. The chain is Cytochrome c oxidase polypeptide I+III (caaA) from Thermus thermophilus (strain ATCC 27634 / DSM 579 / HB8).